The chain runs to 128 residues: MNISKFNEFENVLFHICLDVDFVLENEFGNSYDIHPNRPFRGKAANGLLDGLFSVTTTFTSGYGSRFGRGYLIIIEILTLNFVDDEFWDKINKRGIEIFREGLKNKFPSKNLDIVLDGNVYKIIGPFF.

This is an uncharacterized protein from Borreliella burgdorferi (strain ATCC 35210 / DSM 4680 / CIP 102532 / B31) (Borrelia burgdorferi).